Reading from the N-terminus, the 504-residue chain is Hexose transporter 1 (504 aa).

Topologically, residues 1–29 are cytoplasmic; that stretch reads MTKSSKDICSENEGKKNGKSGFFSTSFKY. A helical membrane pass occupies residues 30–50; it reads VLSACIASFIFGYQVSVLNTI. The Extracellular segment spans residues 51-78; sequence KNFIVVEFEWCKGEKDRLNCSNNTIQSS. An intrachain disulfide couples Cys61 to Cys70. A helical membrane pass occupies residues 79 to 99; the sequence is FLLASVFIGAVLGCGFSGYLV. Residues 100 to 104 are Cytoplasmic-facing; sequence QFGRR. The chain crosses the membrane as a helical span at residues 105–125; that stretch reads LSLLIIYNFFFLVSILTSITH. Over 126-129 the chain is Extracellular; that stretch reads HFHT. A helical transmembrane segment spans residues 130–150; sequence ILFARLLSGFGIGLVTVSVPM. The Cytoplasmic segment spans residues 151 to 165; the sequence is YISEMTHKDKKGAYG. Residues 166–186 form a helical membrane-spanning segment; sequence VMHQLFITFGIFVAVMLGLAM. Gln169 is a binding site for alpha-D-glucose. A beta-D-glucose-binding site is contributed by Gln169. Residues 187 to 207 lie on the Extracellular side of the membrane; that stretch reads GEGPKADSTEPLTSFAKLWWR. Residues 208–228 form a helical membrane-spanning segment; sequence LMFLFPSVISLIGILALVVFF. At 229-293 the chain is on the cytoplasmic side; the sequence is KEETPYFLFE…SALKIPSYRY (65 aa). Residues 294–314 form a helical membrane-spanning segment; the sequence is VIILGCLLSGLQQFTGINVLV. Gln305, Gln306, and Asn311 together coordinate alpha-D-glucose. A beta-D-glucose-binding site is contributed by Gln305. Asn311 provides a ligand contact to beta-D-glucose. At 315-331 the chain is on the extracellular side; the sequence is SNSNELYKEFLDSHLIT. The helical transmembrane segment at 332–352 threads the bilayer; that stretch reads ILSVVMTAVNFLMTFPAIYIV. Asn341 is a beta-D-glucose binding site. Residues 353-358 lie on the Cytoplasmic side of the membrane; it reads EKLGRK. The chain crosses the membrane as a helical span at residues 359 to 379; it reads TLLLWGCVGVLVAYLPTAIAN. At 380 to 392 the chain is on the extracellular side; it reads EINRNSNFVKILS. A helical membrane pass occupies residues 393–413; sequence IVATFVMIISFAVSYGPVLWI. Residue Trp412 coordinates alpha-D-glucose. Topologically, residues 414–429 are cytoplasmic; the sequence is YLHEMFPSEIKDSAAS. A helical transmembrane segment spans residues 430–450; the sequence is LASLVNWVCAIIVVFPSDIII. Over 451–455 the chain is Extracellular; the sequence is KKSPS. Residues 456 to 476 traverse the membrane as a helical segment; sequence ILFIVFSVMSILTFFFIFFFI. At 477–504 the chain is on the cytoplasmic side; it reads KETKGGEIGTSPYITMEERQKHMTKSVV.

This sequence belongs to the major facilitator superfamily. Sugar transporter (TC 2.A.1.1) family. In terms of assembly, homodimer.

Its subcellular location is the cell membrane. The enzyme catalyses D-glucose(out) = D-glucose(in). The catalysed reaction is D-fructose(out) = D-fructose(in). It catalyses the reaction D-galactose(in) = D-galactose(out). It carries out the reaction D-mannose(out) = D-mannose(in). The enzyme catalyses D-glucosamine(out) = D-glucosamine(in). The catalysed reaction is D-xylose(out) = D-xylose(in). With respect to regulation, inhibited by cytochalasin B. Inhibited by compound 3361 (3-O-((undec-10-en)-1-yl)-D-glucose). Inhibited by compound HTI-1. Sodium-independent facilitative hexose transporter. Can transport D-glucose and D-fructose. Can transport D-mannose, D-galactose, D-xylose and D-glucosamine. In Plasmodium falciparum (isolate 3D7), this protein is Hexose transporter 1.